A 311-amino-acid chain; its full sequence is Immune-associated nucleotide-binding protein 7 (311 aa).

The 209-residue stretch at 14–222 (KQAENIVLVG…YTDDTYHMIK (209 aa)) folds into the AIG1-type G domain. Residues 23-30 (GRTGNGKS) are G1. Residues 23 to 31 (GRTGNGKSA) and Ser-44 contribute to the GTP site. The interval 50–54 (GVTMK) is G2. Residues 72–75 (DTPG) form a G3 region. The tract at residues 142-145 (TGGD) is G4. Residues 181-183 (DNK) are G5. Asn-182 lines the GTP pocket. Positions 218–295 (YHMIKEESEK…TQENNELNLA (78 aa)) form a coiled coil.

It belongs to the TRAFAC class TrmE-Era-EngA-EngB-Septin-like GTPase superfamily. AIG1/Toc34/Toc159-like paraseptin GTPase family. IAN subfamily. As to expression, ubiquitous.

The chain is Immune-associated nucleotide-binding protein 7 from Arabidopsis thaliana (Mouse-ear cress).